The sequence spans 276 residues: Type II pantothenate kinase (276 aa).

8-15 contacts ATP; sequence DAGGTLTK. Glu76 (proton acceptor) is an active-site residue. ATP-binding positions include Thr105, 127-131, Phe143, and Ser230; that span reads GGTIM.

This sequence belongs to the type II pantothenate kinase family. As to quaternary structure, homodimer.

It is found in the cytoplasm. The enzyme catalyses (R)-pantothenate + ATP = (R)-4'-phosphopantothenate + ADP + H(+). Its pathway is cofactor biosynthesis; coenzyme A biosynthesis; CoA from (R)-pantothenate: step 1/5. Catalyzes the phosphorylation of pantothenate (Pan), the first step in CoA biosynthesis. This is Type II pantothenate kinase from Bacillus cereus (strain AH820).